Here is a 104-residue protein sequence, read N- to C-terminus: UPF0212 protein PH1312 (104 aa).

It belongs to the UPF0212 family.

This Pyrococcus horikoshii (strain ATCC 700860 / DSM 12428 / JCM 9974 / NBRC 100139 / OT-3) protein is UPF0212 protein PH1312.